Here is a 468-residue protein sequence, read N- to C-terminus: Tissue alpha-L-fucosidase (468 aa).

The signal sequence occupies residues 1-29; that stretch reads MRAPGERWRPAGAALWLLLLLLLLGATES. A Phosphothreonine modification is found at threonine 172. N-linked (GlcNAc...) asparagine glycans are attached at residues asparagine 243, asparagine 270, and asparagine 384.

Belongs to the glycosyl hydrolase 29 family. In terms of assembly, homotetramer.

It localises to the lysosome. The catalysed reaction is an alpha-L-fucoside + H2O = L-fucose + an alcohol. The enzyme catalyses a neolactoside IV(2)-alpha-Fuc-nLc4Cer(d18:1(4E)) + H2O = a neolactoside nLc4Cer(d18:1(4E)) + L-fucose. It carries out the reaction a neolactoside IV(2)-alpha-Fuc-nLc4Cer(d18:0) + H2O = a neolactoside nLc4Cer(d18:0) + L-fucose. In terms of biological role, alpha-L-fucosidase is responsible for hydrolyzing the alpha-1,6-linked fucose joined to the reducing-end N-acetylglucosamine of the carbohydrate moieties of glycoproteins. The protein is Tissue alpha-L-fucosidase (FUCA1) of Macaca fascicularis (Crab-eating macaque).